A 311-amino-acid polypeptide reads, in one-letter code: Malate dehydrogenase (311 aa).

Residues 7 to 13 and Asp-34 contribute to the NAD(+) site; that span reads GAAGGIG. 2 residues coordinate substrate: Arg-81 and Arg-87. NAD(+) contacts are provided by residues Asn-94 and 117–119; that span reads ITN. Substrate-binding residues include Asn-119 and Arg-153. His-177 acts as the Proton acceptor in catalysis. Met-227 contacts NAD(+).

The protein belongs to the LDH/MDH superfamily. MDH type 1 family. Homodimer.

The enzyme catalyses (S)-malate + NAD(+) = oxaloacetate + NADH + H(+). Catalyzes the reversible oxidation of malate to oxaloacetate. The protein is Malate dehydrogenase of Shewanella sp. (strain ANA-3).